A 287-amino-acid chain; its full sequence is 2-dehydro-3-deoxyphosphooctonate aldolase (287 aa).

The protein belongs to the KdsA family.

It localises to the cytoplasm. It catalyses the reaction D-arabinose 5-phosphate + phosphoenolpyruvate + H2O = 3-deoxy-alpha-D-manno-2-octulosonate-8-phosphate + phosphate. Its pathway is carbohydrate biosynthesis; 3-deoxy-D-manno-octulosonate biosynthesis; 3-deoxy-D-manno-octulosonate from D-ribulose 5-phosphate: step 2/3. The protein operates within bacterial outer membrane biogenesis; lipopolysaccharide biosynthesis. This chain is 2-dehydro-3-deoxyphosphooctonate aldolase, found in Rhodopseudomonas palustris (strain HaA2).